Reading from the N-terminus, the 845-residue chain is Protein P (845 aa).

Residues methionine 1–glutamine 179 form a terminal protein domain (TP) region. The interval glutamate 180–arginine 348 is spacer. The disordered stretch occupies residues glycine 226–serine 252. Positions leucine 234–glycine 243 are enriched in polar residues. Residues glutamate 349–glutamine 692 are polymerase/reverse transcriptase domain (RT). The Reverse transcriptase domain maps to glutamate 359–isoleucine 602. Mg(2+) is bound by residues aspartate 431, aspartate 553, and aspartate 554. Residues arginine 693–proline 845 form a rnaseH domain (RH) region.

It belongs to the hepadnaviridae P protein family.

It catalyses the reaction DNA(n) + a 2'-deoxyribonucleoside 5'-triphosphate = DNA(n+1) + diphosphate. The catalysed reaction is Endonucleolytic cleavage to 5'-phosphomonoester.. With respect to regulation, activated by host HSP70 and HSP40 in vitro to be able to bind the epsilon loop of the pgRNA. Because deletion of the RNase H region renders the protein partly chaperone-independent, the chaperones may be needed indirectly to relieve occlusion of the RNA-binding site by this domain. Inhibited by several reverse-transcriptase inhibitors: Lamivudine, Adefovir and Entecavir. Multifunctional enzyme that converts the viral RNA genome into dsDNA in viral cytoplasmic capsids. This enzyme displays a DNA polymerase activity that can copy either DNA or RNA templates, and a ribonuclease H (RNase H) activity that cleaves the RNA strand of RNA-DNA heteroduplexes in a partially processive 3'- to 5'-endonucleasic mode. Neo-synthesized pregenomic RNA (pgRNA) are encapsidated together with the P protein, and reverse-transcribed inside the nucleocapsid. Initiation of reverse-transcription occurs first by binding the epsilon loop on the pgRNA genome, and is initiated by protein priming, thereby the 5'-end of (-)DNA is covalently linked to P protein. Partial (+)DNA is synthesized from the (-)DNA template and generates the relaxed circular DNA (RC-DNA) genome. After budding and infection, the RC-DNA migrates in the nucleus, and is converted into a plasmid-like covalently closed circular DNA (cccDNA). The activity of P protein does not seem to be necessary for cccDNA generation, and is presumably released from (+)DNA by host nuclear DNA repair machinery. This chain is Protein P, found in Homo sapiens (Human).